Consider the following 126-residue polypeptide: Fluoride-specific ion channel FluC (126 aa).

A run of 3 helical transmembrane segments spans residues Leu-33–Val-53, Tyr-64–Leu-84, and Gly-96–Gly-116. Na(+)-binding residues include Gly-74 and Thr-77.

This sequence belongs to the fluoride channel Fluc/FEX (TC 1.A.43) family.

Its subcellular location is the cell membrane. It catalyses the reaction fluoride(in) = fluoride(out). Its activity is regulated as follows. Na(+) is not transported, but it plays an essential structural role and its presence is essential for fluoride channel function. Fluoride-specific ion channel. Important for reducing fluoride concentration in the cell, thus reducing its toxicity. The polypeptide is Fluoride-specific ion channel FluC (Nitrosopumilus maritimus (strain SCM1)).